A 238-amino-acid chain; its full sequence is Uridylate kinase (238 aa).

An ATP-binding site is contributed by 12–15 (KLSG). Glycine 54 is a binding site for UMP. The ATP site is built by glycine 55 and arginine 59. UMP is bound by residues aspartate 74 and 135–142 (TGNPFFTT). Threonine 162, asparagine 163, tyrosine 168, and aspartate 171 together coordinate ATP.

The protein belongs to the UMP kinase family. Homohexamer.

The protein resides in the cytoplasm. It catalyses the reaction UMP + ATP = UDP + ADP. It functions in the pathway pyrimidine metabolism; CTP biosynthesis via de novo pathway; UDP from UMP (UMPK route): step 1/1. Inhibited by UTP. Its function is as follows. Catalyzes the reversible phosphorylation of UMP to UDP. This chain is Uridylate kinase, found in Rhodopseudomonas palustris (strain HaA2).